The sequence spans 39 residues: Photosystem II reaction center protein J (39 aa).

The chain crosses the membrane as a helical span at residues Ile-7–Phe-27.

Belongs to the PsbJ family. PSII is composed of 1 copy each of membrane proteins PsbA, PsbB, PsbC, PsbD, PsbE, PsbF, PsbH, PsbI, PsbJ, PsbK, PsbL, PsbM, PsbT, PsbX, PsbY, PsbZ, Psb30/Ycf12, peripheral proteins PsbO, CyanoQ (PsbQ), PsbU, PsbV and a large number of cofactors. It forms dimeric complexes.

Its subcellular location is the cellular thylakoid membrane. Functionally, one of the components of the core complex of photosystem II (PSII). PSII is a light-driven water:plastoquinone oxidoreductase that uses light energy to abstract electrons from H(2)O, generating O(2) and a proton gradient subsequently used for ATP formation. It consists of a core antenna complex that captures photons, and an electron transfer chain that converts photonic excitation into a charge separation. This Synechococcus sp. (strain JA-2-3B'a(2-13)) (Cyanobacteria bacterium Yellowstone B-Prime) protein is Photosystem II reaction center protein J.